The sequence spans 1580 residues: MWPSQLLVFMMLLAPIIHGGKHSERHPALASPLRHAERGPGGALPPRHLLQQPAAERATAHRGPGPRGATRGVRGPGAHGAQISAQAFSRAPIPMAVVRRELSCESYPIELRCPGTDVIMIESANYGRTDDKICDSDPAQMENIRCYLPDAYKIMSQRCNNRTQCAVVAGPDVFPDPCPGTYKYLEVQYECVPYKVEQKVFLCPGLLKGVYQSEHLFESDHQSGAWCKDPLQASDKIYYMPWTPYRTDTLTEYSSKDDFIAGRPTTTYKLPHRVDGTGFVVYDGALFFNKERTRNIVKFDLRTRIKSGEAIIANANYHDTSPYRWGGKSDIDLAVDENGLWVIYATEQNNGKIVISQLNPYTLRIEGTWDTAYDKRSASNAFMICGILYVVKSVYEDDDNEATGNKIDYIYNTDQSKDSLVDVPFPNSYQYIAAVDYNPRDNLLYVWNNYHVVKYSLDFGPLDSRSGQAHHGQVSYISPPIHLDSDLERPPVREISTTGPLGTGSTTTSTTLRTTTWSPGRSTTPSVSGRRNRSTSTPSPAIEVLNDITTHVPSASPQIPALEESCEAVEAREIMWFKTRQGQMAKQPCPAGTIGVSTYLCLAPDGIWDPQGPDLSNCSSPWVNHITQKLKSGETAANIARELAEQTRNHLNAGDITYSVRAMDQLVGLLDVQLRNLTPGGKDSAARSLNKLQKRERSCRAYVQAMVETVNNLLQPQALNAWRDLTTSDQLRAATMLLDTVEESAFVLADNLLKTDIVRENTDNIQLEVARLSTEGNLEDLKFPENTGHGSTIQLSANTLKQNGRNGEIRVAFVLYNNLGPYLSTENASMKLGTEAMSTNHSVIVNSPVITAAINKEFSNKVYLADPVVFTVKHIKQSEENFNPNCSFWSYSKRTMTGYWSTQGCRLLTTNKTHTTCSCNHLTNFAVLMAHVEVKHSDAVHDLLLDVITWVGILLSLVCLLICIFTFCFFRGLQSDRNTIHKNLCISLFVAELLFLIGINRTDQPIACAVFAALLHFFFLAAFTWMFLEGVQLYIMLVEVFESEHSRRKYFYLVGYGMPALIVAVSAAVDYRSYGTDKVCWLRLDTYFIWSFIGPATLIIMLNVIFLGIALYKMFHHTAILKPESGCLDNINYEDNRPFIKSWVIGAIALLCLLGLTWAFGLMYINESTVIMAYLFTIFNSLQGMFIFIFHCVLQKKVRKEYGKCLRTHCCSGRSTESSIGSGKTSGSRTPGRYSTGSQSRIRRMWNDTVRKQSESSFITGDINSSASLNRGAMANHLISNALLRPHGTNNPYNTLLGEPAVCNNPSVSMYNAQEGLLNNARDTSVMDTLPLNGNHGNSYSIASGEYLSNCVQIIDRGYNHNETALEKKILKELTSNYIPSYLNNHERSSEQNRNLMNKLVNNLGSGSEDDAIVLDDATSFNHEESLGLELIHEESDAPLLPPRVYSTENHQLHHYTRRRIPQDHSESFFPLLTNEHTEDLQSPHRDSLYTSMPALAGVPTAESVTTSTQTEPPPAKCGDAEDVYYKSMPNLGSRNHVHQLHTYYQLGRGSSDGFIVPPNKDGTPPEGSSKGPAHLVTSL.

An N-terminal signal peptide occupies residues 1-19 (MWPSQLLVFMMLLAPIIHG). At 20-949 (GKHSERHPAL…VHDLLLDVIT (930 aa)) the chain is on the extracellular side. The interval 23–81 (SERHPALASPLRHAERGPGGALPPRHLLQQPAAERATAHRGPGPRGATRGVRGPGAHGA) is disordered. Residues 103–192 (SCESYPIELR…KYLEVQYECV (90 aa)) enclose the SUEL-type lectin domain. Intrachain disulfides connect C104-C134, C113-C191, C146-C178, C159-C165, and C203-C385. N-linked (GlcNAc...) asparagine glycosylation occurs at N161. The Olfactomedin-like domain maps to 202–461 (LCPGLLKGVY…VVKYSLDFGP (260 aa)). An interaction with FLRT3 region spans residues 317–347 (YHDTSPYRWGGKSDIDLAVDENGLWVIYATE). The Ca(2+) site is built by D332, N380, A381, and V435. Residues 494-540 (EISTTGPLGTGSTTTSTTLRTTTWSPGRSTTPSVSGRRNRSTSTPSP) are disordered. Positions 496–521 (STTGPLGTGSTTTSTTLRTTTWSPGR) are enriched in low complexity. Residues 522–539 (STTPSVSGRRNRSTSTPS) are compositionally biased toward polar residues. Residues N532, N617, N827, N840, N885, and N911 are each glycosylated (N-linked (GlcNAc...) asparagine). Residues 756–935 (DIVRENTDNI…AVLMAHVEVK (180 aa)) form the GAIN-B domain. 2 disulfides stabilise this stretch: C886/C917 and C905/C919. The interval 886–935 (CSFWSYSKRTMTGYWSTQGCRLLTTNKTHTTCSCNHLTNFAVLMAHVEVK) is GPS. The tract at residues 923 to 939 (TNFAVLMAHVEVKHSDA) is stachel. A helical transmembrane segment spans residues 950-970 (WVGILLSLVCLLICIFTFCFF). Residues 971–978 (RGLQSDRN) lie on the Cytoplasmic side of the membrane. The chain crosses the membrane as a helical span at residues 979–999 (TIHKNLCISLFVAELLFLIGI). N-linked (GlcNAc...) asparagine glycosylation occurs at N1000. Over 1000-1007 (NRTDQPIA) the chain is Extracellular. A helical membrane pass occupies residues 1008–1028 (CAVFAALLHFFFLAAFTWMFL). Topologically, residues 1029–1050 (EGVQLYIMLVEVFESEHSRRKY) are cytoplasmic. A helical membrane pass occupies residues 1051 to 1071 (FYLVGYGMPALIVAVSAAVDY). Topologically, residues 1072 to 1088 (RSYGTDKVCWLRLDTYF) are extracellular. The chain crosses the membrane as a helical span at residues 1089–1109 (IWSFIGPATLIIMLNVIFLGI). Residues 1110 to 1142 (ALYKMFHHTAILKPESGCLDNINYEDNRPFIKS) are Cytoplasmic-facing. The helical transmembrane segment at 1143–1163 (WVIGAIALLCLLGLTWAFGLM) threads the bilayer. The Extracellular segment spans residues 1164 to 1169 (YINEST). N1166 carries an N-linked (GlcNAc...) asparagine glycan. The chain crosses the membrane as a helical span at residues 1170-1190 (VIMAYLFTIFNSLQGMFIFIF). The Cytoplasmic portion of the chain corresponds to 1191–1580 (HCVLQKKVRK…KGPAHLVTSL (390 aa)). Positions 1213–1238 (GRSTESSIGSGKTSGSRTPGRYSTGS) are disordered. Residue S1254 is modified to Phosphoserine. The tract at residues 1555–1580 (FIVPPNKDGTPPEGSSKGPAHLVTSL) is disordered. Residues 1575-1580 (HLVTSL) carry the PDZ-binding motif.

Belongs to the G-protein coupled receptor 2 family. LN-TM7 subfamily. Heterodimer of 2 chains generated by proteolytic processing; the large extracellular N-terminal fragment and the membrane-bound C-terminal fragment predominantly remain associated and non-covalently linked. Interacts (via olfactomedin-like domain) with FLRT1 (via extracellular domain). Interacts (via olfactomedin-like domain) with FLRT2 (via extracellular domain). Interacts (via olfactomedin-like domain) with FLRT3 (via extracellular domain); the interaction is direct. Interacts (via extracellular domain) with TENM1. Interacts (via extracellular domain) with TENM2. Interacts (via extracellular domain) with TENM3. Identified in a complex with FLRT3 and UNC5B; does not interact with UNC5B by itself. Identified in a complex with FLRT3 and UNC5D; does not interact with UNC5D by itself. As to quaternary structure, interacts (via PDZ-binding motif) with SHANK3. Interacts (via PDZ-binding motif) with DLG4. In terms of processing, autoproteolytically processed at the GPS region of the GAIN-B domain; this cleavage modulates receptor activity. In terms of tissue distribution, brain-specific distribution but low levels are also detected in lung and spleen.

The protein resides in the cell membrane. The protein localises to the postsynaptic cell membrane. Its subcellular location is the cell projection. It localises to the axon. It is found in the cell junction. Forms a heterodimer of 2 chains generated by proteolytic processing that remain associated through non-covalent interactions mediated by the GAIN-B domain. In the inactivated receptor, the Stachel sequence (also named stalk) is embedded in the GAIN-B domain, where it adopts a beta-strand conformation. On activation, the Stachel moves into the 7 transmembrane region and adopts a twisted hook-shaped configuration that forms contacts within the receptor, leading to coupling of a G-alpha protein, which activates signaling. The cleaved GAIN-B and N-terminal domains can then dissociate from the rest of the receptor. Its function is as follows. Orphan adhesion G-protein coupled receptor (aGPCR), which mediates synapse specificity. Ligand binding causes a conformation change that triggers signaling via guanine nucleotide-binding proteins (G proteins) and modulates the activity of downstream effectors. ADGRL3 is coupled with different classes of G alpha proteins, such as G(12)/G(13), G(s), G(i) or G(q), depending on the context. Coupling to G(12)/G(13) G proteins, which mediates the activation Rho small GTPases is the most efficient. Following G-protein coupled receptor activation, associates with cell adhesion molecules that are expressed at the surface of adjacent cells to direct synapse specificity. Specifically mediates the establishment of Schaffer-collateral synapses formed by CA3-region axons on CA1-region pyramidal neurons in the hippocampus. Localizes to postsynaptic spines in excitatory synapses in the S.oriens and S.radiatum and interacts with presynaptic cell adhesion molecules FLRT3 and TENM2, promoting synapse formation. Plays a role in the development of glutamatergic synapses in the cortex. Important in determining the connectivity rates between the principal neurons in the cortex. Orphan adhesion G-protein coupled receptor (aGPCR), which mediates synapse specificity. Ligand binding causes a conformation change that triggers signaling via guanine nucleotide-binding proteins (G proteins) and modulates the activity of downstream effectors, such as adenylate cyclase. Isoform 1 is specifically coupled to G(s) G proteins and mediates activation of adenylate cyclase activity. Following G-protein coupled receptor activation, undergoes liquid-liquid phase transition, associates with (1) cell adhesion molecules that are expressed at the surface of adjacent cells, as well as (2) PDZ-containing proteins, such as SHANK3 and DLG4, in the cytoplasm to direct synapse formation. This chain is Adhesion G protein-coupled receptor L3, found in Bos taurus (Bovine).